Consider the following 284-residue polypeptide: Avenin-like b4 (284 aa).

A signal peptide spans 1 to 18 (MKVFILALLALTATTAIA).

Belongs to the prolamin family. In terms of processing, contains disulfide bonds.

Its function is as follows. Seed storage protein. Might be integrated via inter-chain disulfide bonds within the glutenin polymer. The polypeptide is Avenin-like b4 (Triticum aestivum (Wheat)).